Reading from the N-terminus, the 491-residue chain is Carboxypeptidase SOL1 (491 aa).

The N-terminal stretch at Met1–Ala25 is a signal peptide. Residues Arg26–Asn452 lie on the Extracellular side of the membrane. Asn39 is a glycosylation site (N-linked (GlcNAc...) asparagine). In terms of domain architecture, Peptidase M14 spans Gly64–Leu338. Zn(2+)-binding residues include His125 and Glu128. Substrate-binding positions include His125 to Glu128 and Asn186 to Arg187. His226 lines the Zn(2+) pocket. An N-linked (GlcNAc...) asparagine glycan is attached at Asn268. Tyr286 lines the substrate pocket. The active-site Proton donor/acceptor is the Glu308. The chain crosses the membrane as a helical span at residues Asn453–Leu470. The Cytoplasmic segment spans residues Gln471 to Val491.

Belongs to the peptidase M14 family. Zn(2+) is required as a cofactor. Expressed in roots, shoots, leaves, flowers and siliques.

It localises to the endosome membrane. Functionally, possesses in vitro carboxypeptidase activity against the C-terminal arginine and lysine residues. Involved in the maturation of CLE19. Removes the C-terminal arginine residue of CLE19 proprotein. The cleavage of the C-terminal arginine residue is necessary for CLE19 activity in vivo. Is not involved in generating active CLV3. Is not involved in CLE19 or CLV3 perception. This is Carboxypeptidase SOL1 from Arabidopsis thaliana (Mouse-ear cress).